Here is a 469-residue protein sequence, read N- to C-terminus: MDKKMKRTRIADALHGGLVGQEINIKGWVRTKRGNKAVNFIALNDGSTIHNMQIVADLASFDAAQMSQITTGACIGVIGTLVESQGAGQSVEVQASAIEIYGTADPATYPLQKKGHTLEFLREIAHLRPRTNTFGVIYRIRHHMAIAIHTFFHNKGYYYFHAPLITASDCEGAGQMFQVTTLNPDSLPRTEEGQVDYRKDFFGRHTSLTVSGQLEGEMAAMALGGIYTFGPTFRAENSNTPRHLAEFWMIEPEVAFLEIEDNMDLAEEFIKYCVQWALDNCMDDISFLSEHFDKELIDRLKFVLEKPFVRLAYTEGIRILEEAVKNGVKFEFPIYWGADLASEHERYLVEVHFKTPVIMTDYPKEIKSFYMKLNDDGKTVRGMDVLFPKIGEIIGGSEREADYDKLVARANEMGVPEKDIWWYLDSRRYGTAPHSGFGLGFERLLLFVTGMSNIRDVIPFPRTPNNAEF.

The protein belongs to the class-II aminoacyl-tRNA synthetase family. Homodimer.

Its subcellular location is the cytoplasm. The enzyme catalyses tRNA(Asn) + L-asparagine + ATP = L-asparaginyl-tRNA(Asn) + AMP + diphosphate + H(+). The protein is Asparagine--tRNA ligase of Porphyromonas gingivalis (strain ATCC 33277 / DSM 20709 / CIP 103683 / JCM 12257 / NCTC 11834 / 2561).